Consider the following 276-residue polypeptide: NH(3)-dependent NAD(+) synthetase (276 aa).

43-50 (GISGGVDS) lines the ATP pocket. Aspartate 49 contacts Mg(2+). Residue arginine 146 participates in deamido-NAD(+) binding. Threonine 166 lines the ATP pocket. Residue glutamate 171 participates in Mg(2+) binding. 2 residues coordinate deamido-NAD(+): lysine 179 and aspartate 186. ATP contacts are provided by lysine 195 and threonine 217. 266-267 (HK) serves as a coordination point for deamido-NAD(+).

Belongs to the NAD synthetase family. As to quaternary structure, homodimer.

The enzyme catalyses deamido-NAD(+) + NH4(+) + ATP = AMP + diphosphate + NAD(+) + H(+). It participates in cofactor biosynthesis; NAD(+) biosynthesis; NAD(+) from deamido-NAD(+) (ammonia route): step 1/1. Functionally, catalyzes the ATP-dependent amidation of deamido-NAD to form NAD. Uses ammonia as a nitrogen source. This Shewanella putrefaciens (strain CN-32 / ATCC BAA-453) protein is NH(3)-dependent NAD(+) synthetase.